A 300-amino-acid polypeptide reads, in one-letter code: Cysteine-rich venom protein (300 aa).

The N-terminal stretch at 1 to 21 is a signal peptide; the sequence is MLSTMQTVGAVLMLSIVLVAG. Residues 22-24 constitute a propeptide that is removed on maturation; that stretch reads RKR. Positions 62–183 constitute an SCP domain; that stretch reads LEMHNKIRAD…GNNKYFVCNY (122 aa).

In terms of processing, contains 11 disulfide bonds. As to expression, expressed by the venom duct.

It is found in the secreted. Its function is as follows. Protease responsible for cleaving the conotoxins from their propeptide precursors. The target propeptide requires minimum four residues including a leucine N-terminal of the cleavage site for efficient substrate processing (example: Xaa-Xaa-Xaa-Leu-Asn-Lys-Arg-toxin). This is Cysteine-rich venom protein from Conus textile (Cloth-of-gold cone).